The sequence spans 313 residues: Tyrosine recombinase XerD (313 aa).

In terms of domain architecture, Core-binding (CB) spans 17-102 (EDNDVIIEQF…TLRRFFQYLY (86 aa)). The Tyr recombinase domain occupies 123–307 (RLPKDLSEQQ…ATERLKVLHQ (185 aa)). Catalysis depends on residues Arg163, Lys187, His259, Arg262, and His285. Residue Tyr294 is the O-(3'-phospho-DNA)-tyrosine intermediate of the active site.

This sequence belongs to the 'phage' integrase family. XerD subfamily. Forms a cyclic heterotetrameric complex composed of two molecules of XerC and two molecules of XerD, in which XerC interacts with XerD via its C-terminal region, XerD interacts with XerC via its C-terminal region and so on.

It localises to the cytoplasm. With respect to regulation, ftsK may regulate the catalytic switch between XerC and XerD in the heterotetrameric complex during the two steps of the recombination process. Site-specific tyrosine recombinase, which acts by catalyzing the cutting and rejoining of the recombining DNA molecules. Binds cooperatively to specific DNA consensus sequences that are separated from XerC binding sites by a short central region, forming the heterotetrameric XerC-XerD complex that recombines DNA substrates. The complex is essential to convert dimers of the bacterial chromosome into monomers to permit their segregation at cell division. It also contributes to the segregational stability of plasmids. In the complex XerD specifically exchanges the bottom DNA strands. This chain is Tyrosine recombinase XerD, found in Proteus mirabilis.